Consider the following 240-residue polypeptide: GATA transcription factor 4 (240 aa).

Residues 104–124 (ISFTGKPRSRRSRAPAPSVAG) are disordered. The Nuclear localization signal motif lies at 109 to 116 (KPRSRRSR). The GATA-type zinc-finger motif lies at 154–208 (ADGARRCTHCASEKTPQWRTGPLGPKTLCNACGVRYKSGRLVPEYRPASSPTFVL).

Belongs to the type IV zinc-finger family. Class A subfamily. In terms of tissue distribution, expressed in roots, flowers and leaves, and to a lower extent in stems.

The protein localises to the nucleus. In terms of biological role, transcriptional activator that specifically binds 5'-GATA-3' or 5'-GAT-3' motifs within gene promoters. May be involved in the regulation of some light-responsive genes. The chain is GATA transcription factor 4 (GATA4) from Arabidopsis thaliana (Mouse-ear cress).